The primary structure comprises 1001 residues: Sarcoplasmic/endoplasmic reticulum calcium ATPase 1 (1001 aa).

Topologically, residues 1 to 48 (MEAAHSKSTEECLAYFGVSETTGLTPDQVKRHLEKYGHNELPAEEGKS) are cytoplasmic. Residues 49 to 69 (LWELVIEQFEDLLVRILLLAA) form a helical membrane-spanning segment. The Lumenal portion of the chain corresponds to 70 to 89 (CISFVLAWFEEGEETITAFV). The chain crosses the membrane as a helical span at residues 90-110 (EPFVILLILIANAIVGVWQER). The Cytoplasmic segment spans residues 111–253 (NAENAIEALK…QDKTPLQQKL (143 aa)). A helical transmembrane segment spans residues 254 to 273 (DEFGEQLSKVISLICVAVWL). At 274-295 (INIGHFNDPVHGGSWIRGAIYY) the chain is on the lumenal side. The helical transmembrane segment at 296–313 (FKIAVALAVAAIPEGLPA) threads the bilayer. Val304, Ala305, Ile307, and Glu309 together coordinate Ca(2+). At 314–757 (VITTCLALGT…EEGRAIYNNM (444 aa)) the chain is on the cytoplasmic side. Asp351 serves as the catalytic 4-aspartylphosphate intermediate. Asp351 and Thr353 together coordinate Mg(2+). Thr353 lines the ATP pocket. A Phosphothreonine modification is found at Thr441. ATP contacts are provided by Glu442, Arg489, Lys515, and Arg560. Residue Thr569 is modified to Phosphothreonine. Position 581 is a phosphoserine (Ser581). ATP contacts are provided by Thr625, Gly626, Asp627, Arg678, and Lys684. Asp703 lines the Mg(2+) pocket. Position 706 (Asn706) interacts with ATP. Residues 758–777 (KQFIRYLISSNVGEVVCIFL) traverse the membrane as a helical segment. Ca(2+)-binding residues include Asn768 and Glu771. Over 778 to 787 (TAALGLPEAL) the chain is Lumenal. The helical transmembrane segment at 788-808 (IPVQLLWVNLVTDGLPATALG) threads the bilayer. Residues 788–808 (IPVQLLWVNLVTDGLPATALG) form an interaction with PLN region. Ca(2+)-binding residues include Asn796, Thr799, and Asp800. The Cytoplasmic segment spans residues 809–828 (FNPPDLDIMDRPPRSPKEPL). The chain crosses the membrane as a helical span at residues 829-851 (ISGWLFFRYMAIGGYVGAATVGA). At 852-897 (AAWWFMYAEDGPGVTYHQLTHFMQCTEDHPHFEGLDCEIFEAPEPM) the chain is on the lumenal side. Cys876 and Cys888 are oxidised to a cystine. The helical transmembrane segment at 898 to 917 (TMALSVLVTIEMCNALNSLS) threads the bilayer. A Ca(2+)-binding site is contributed by Glu908. Residues 918–930 (ENQSLMRMPPWVN) are Cytoplasmic-facing. The chain crosses the membrane as a helical span at residues 931-949 (IWLLGSICLSMSLHFLILY). An interaction with PLN region spans residues 932-943 (WLLGSICLSMSL). Residues 950-964 (VDPLPMIFKLKALDL) are Lumenal-facing. A helical membrane pass occupies residues 965 to 985 (TQWLMVLKISLPVIGLDEILK). The Cytoplasmic segment spans residues 986–1001 (FIARNYLEDPEDERRK).

This sequence belongs to the cation transport ATPase (P-type) (TC 3.A.3) family. Type IIA subfamily. In terms of assembly, interacts with sarcolipin (SLN). Interacts with phospholamban (PLN). Interacts with myoregulin (MRLN). Interacts with DWORF. Interacts with VMP1. Requires Mg(2+) as cofactor. In terms of tissue distribution, skeletal muscle (at protein level). Skeletal muscle, fast twitch muscle (type II) fibers.

It localises to the endoplasmic reticulum membrane. It is found in the sarcoplasmic reticulum membrane. It catalyses the reaction Ca(2+)(in) + ATP + H2O = Ca(2+)(out) + ADP + phosphate + H(+). Its activity is regulated as follows. Inhibited by sarcolipin (SLN) and myoregulin (MRLN). Has also been shown to be reversibly inhibited by phospholamban (PLN) at low calcium concentrations in vitro. Dephosphorylated PLN decreases the apparent affinity of the ATPase for calcium and this inhibition is regulated by the phosphorylation of PLN in vitro. Enhanced by DWORF; DWORF increases activity by displacing sarcolipin (SLN), phospholamban (PLN) and myoregulin (MRLN). In terms of biological role, key regulator of striated muscle performance by acting as the major Ca(2+) ATPase responsible for the reuptake of cytosolic Ca(2+) into the sarcoplasmic reticulum. Catalyzes the hydrolysis of ATP coupled with the translocation of calcium from the cytosol to the sarcoplasmic reticulum lumen. Contributes to calcium sequestration involved in muscular excitation/contraction. This chain is Sarcoplasmic/endoplasmic reticulum calcium ATPase 1 (ATP2A1), found in Oryctolagus cuniculus (Rabbit).